A 574-amino-acid polypeptide reads, in one-letter code: Proline--tRNA ligase (574 aa).

Belongs to the class-II aminoacyl-tRNA synthetase family. ProS type 1 subfamily. As to quaternary structure, homodimer.

Its subcellular location is the cytoplasm. The catalysed reaction is tRNA(Pro) + L-proline + ATP = L-prolyl-tRNA(Pro) + AMP + diphosphate. Functionally, catalyzes the attachment of proline to tRNA(Pro) in a two-step reaction: proline is first activated by ATP to form Pro-AMP and then transferred to the acceptor end of tRNA(Pro). As ProRS can inadvertently accommodate and process non-cognate amino acids such as alanine and cysteine, to avoid such errors it has two additional distinct editing activities against alanine. One activity is designated as 'pretransfer' editing and involves the tRNA(Pro)-independent hydrolysis of activated Ala-AMP. The other activity is designated 'posttransfer' editing and involves deacylation of mischarged Ala-tRNA(Pro). The misacylated Cys-tRNA(Pro) is not edited by ProRS. The chain is Proline--tRNA ligase from Hahella chejuensis (strain KCTC 2396).